Consider the following 495-residue polypeptide: Probable cytosol aminopeptidase (495 aa).

Mn(2+) contacts are provided by lysine 267 and aspartate 272. Residue lysine 279 is part of the active site. The Mn(2+) site is built by aspartate 290, aspartate 349, and glutamate 351. The active site involves arginine 353.

It belongs to the peptidase M17 family. Mn(2+) serves as cofactor.

It is found in the cytoplasm. It catalyses the reaction Release of an N-terminal amino acid, Xaa-|-Yaa-, in which Xaa is preferably Leu, but may be other amino acids including Pro although not Arg or Lys, and Yaa may be Pro. Amino acid amides and methyl esters are also readily hydrolyzed, but rates on arylamides are exceedingly low.. The catalysed reaction is Release of an N-terminal amino acid, preferentially leucine, but not glutamic or aspartic acids.. Presumably involved in the processing and regular turnover of intracellular proteins. Catalyzes the removal of unsubstituted N-terminal amino acids from various peptides. This is Probable cytosol aminopeptidase from Histophilus somni (strain 2336) (Haemophilus somnus).